Here is a 449-residue protein sequence, read N- to C-terminus: NADH-quinone oxidoreductase subunit H (449 aa).

The next 9 helical transmembrane spans lie at 29–49 (ILLK…FAIV), 96–116 (PIFI…FAVI), 136–156 (LPVS…GLIL), 177–197 (IISY…YAGT), 211–231 (WYIV…GETN), 259–279 (FFFL…TTLF), 298–318 (WVPL…FIWL), 330–350 (FMSF…LAVA), and 365–385 (WLVG…IDPG). Residues 393 to 402 (LEEAEQRKLA) show a composition bias toward basic and acidic residues. The interval 393 to 449 (LEEAEQRKLAEAPSLDRIPWPPPPQAAGRGRPAVSAGASANGSSTVIPADPGPRQER) is disordered. The span at 418-436 (AAGRGRPAVSAGASANGSS) shows a compositional bias: low complexity.

Belongs to the complex I subunit 1 family. NDH-1 is composed of 14 different subunits. Subunits NuoA, H, J, K, L, M, N constitute the membrane sector of the complex.

It is found in the cell membrane. The catalysed reaction is a quinone + NADH + 5 H(+)(in) = a quinol + NAD(+) + 4 H(+)(out). Its function is as follows. NDH-1 shuttles electrons from NADH, via FMN and iron-sulfur (Fe-S) centers, to quinones in the respiratory chain. The immediate electron acceptor for the enzyme in this species is believed to be ubiquinone. Couples the redox reaction to proton translocation (for every two electrons transferred, four hydrogen ions are translocated across the cytoplasmic membrane), and thus conserves the redox energy in a proton gradient. This subunit may bind ubiquinone. This Frankia casuarinae (strain DSM 45818 / CECT 9043 / HFP020203 / CcI3) protein is NADH-quinone oxidoreductase subunit H.